The following is a 225-amino-acid chain: Uracil-DNA glycosylase (225 aa).

Aspartate 65 (proton acceptor) is an active-site residue.

This sequence belongs to the uracil-DNA glycosylase (UDG) superfamily. UNG family.

The protein localises to the cytoplasm. It catalyses the reaction Hydrolyzes single-stranded DNA or mismatched double-stranded DNA and polynucleotides, releasing free uracil.. Excises uracil residues from the DNA which can arise as a result of misincorporation of dUMP residues by DNA polymerase or due to deamination of cytosine. The chain is Uracil-DNA glycosylase from Clostridium perfringens (strain SM101 / Type A).